Reading from the N-terminus, the 139-residue chain is D-ribose pyranase (139 aa).

Catalysis depends on H20, which acts as the Proton donor. Substrate-binding positions include D28, H106, and Y128–N130.

This sequence belongs to the RbsD / FucU family. RbsD subfamily. Homodecamer.

It localises to the cytoplasm. It catalyses the reaction beta-D-ribopyranose = beta-D-ribofuranose. The protein operates within carbohydrate metabolism; D-ribose degradation; D-ribose 5-phosphate from beta-D-ribopyranose: step 1/2. Its function is as follows. Catalyzes the interconversion of beta-pyran and beta-furan forms of D-ribose. The polypeptide is D-ribose pyranase (Aeromonas salmonicida (strain A449)).